Consider the following 1010-residue polypeptide: Lethal(2) giant larvae protein homolog SRO77 (1010 aa).

WD repeat units lie at residues 47–80 (TVTT…VVFT), 87–122 (IKHM…TTVF), 127–163 (ITCI…KLKI), 182–215 (SIQW…KQHF), 240–275 (VIQS…IHAR), 299–364 (AIFK…QKLF), 372–407 (LINF…ETLI), 431–504 (VTTC…FEVN), 518–595 (KNIS…STVI), 602–637 (VSAI…FNEN), 649–700 (VSTV…DATK), 709–763 (GINS…THAL), 768–815 (IATS…KNLR), and 829–852 (SILE…SVLN). The tract at residues 932–958 (SNAARKLPPGTEDHRYARPVRSSGRSN) is disordered.

The protein belongs to the WD repeat L(2)GL family. Interacts with SEC9.

Its function is as follows. Acts as an allosteric regulator of polarized exocytosis by promoting the targeted fusion of vesicles with the plasma membrane. Involved in maintenance of ion homeostasis in cells exposed to NaCl stress. May be involved in the targeting of the myosin proteins to their intrinsic pathways. Multicopy suppressor of RHO3. May also participate in the maintenance of cell polarity and bud growth. The protein is Lethal(2) giant larvae protein homolog SRO77 (SRO77) of Saccharomyces cerevisiae (strain ATCC 204508 / S288c) (Baker's yeast).